A 382-amino-acid chain; its full sequence is Sphingosine 1-phosphate receptor 1 (382 aa).

Position 2 is an N-acetylvaline (valine 2). At 2-46 (VSTSIPEVKALRSSVSDYGNYDIIVRHYNYTGKLNIGAEKDHGIK) the chain is on the extracellular side. Residue lysine 10 is modified to N6-acetyllysine. The N-linked (GlcNAc...) asparagine glycan is linked to asparagine 30. A helical transmembrane segment spans residues 47–68 (LTSVVFILICCFIILENIFVLL). Topologically, residues 69–82 (TIWKTKKFHRPMYY) are cytoplasmic. Residues 83–104 (FIGNLALSDLLAGVAYTANLLL) form a helical membrane-spanning segment. The Extracellular segment spans residues 105 to 116 (SGATTYKLTPAQ). A helical membrane pass occupies residues 117-138 (WFLREGSMFVALSASVFSLLAI). 120–121 (RE) is a binding site for sphing-4-enine 1-phosphate. The Cytoplasmic segment spans residues 139–160 (AIERYITMLKMKLHNGSNSSRS). A helical membrane pass occupies residues 161 to 182 (FLLISACWVISLILGGLPIMGW). Residues 183–196 (NCISSLSSCSTVLP) lie on the Extracellular side of the membrane. Cysteines 184 and 191 form a disulfide. A helical transmembrane segment spans residues 197-224 (LYHKHYILFCTTVFTLLLLSIVILYCRI). Residues 225–257 (YSLVRTRSRRLTFRKNISKASRSSEKSLALLKT) lie on the Cytoplasmic side of the membrane. The residue at position 236 (threonine 236) is a Phosphothreonine. The helical transmembrane segment at 258–278 (VIIVLSVFIACWAPLFILLLL) threads the bilayer. 265 to 269 (FIACW) serves as a coordination point for sphing-4-enine 1-phosphate. Topologically, residues 279–289 (DVGCKAKTCDI) are extracellular. An intrachain disulfide couples cysteine 282 to cysteine 287. A helical transmembrane segment spans residues 290–310 (LYKAEYFLVLAVLNSGTNPII). Over 311 to 382 (YTLTNKEMRR…MSSGNVNSSS (72 aa)) the chain is Cytoplasmic. Cysteine 328 is lipidated: S-palmitoyl cysteine. A disordered region spans residues 348–382 (MEFSRSKSDNSSHPQKDDGDNPETIMSSGNVNSSS). Phosphoserine is present on residues serine 351 and serine 353. The segment covering 351–366 (SRSKSDNSSHPQKDDG) has biased composition (basic and acidic residues). The span at 371–382 (TIMSSGNVNSSS) shows a compositional bias: polar residues.

This sequence belongs to the G-protein coupled receptor 1 family. As to quaternary structure, interacts with GNAI1 and GNAI3. Interacts with CD69; this interaction promotes S1PR1 degradation. In terms of processing, palmitoylated by ZDHHC5. Palmitoylation is required for targeting to plasma membrane, enabling G(i) coupling. As to expression, expressed in a wide variety of tissues with highest levels in brain, heart and spleen. Lower levels found in kidney, liver, lung, muscle, placenta, thymus, and uterus. Very low levels in intestine, stomach and testis. According to PubMed:9931453, expressed modestly in apparent endothelial cells surrounding some blood vessels (e.g. aortic trunk).

It localises to the cell membrane. It is found in the endosome. The protein resides in the membrane raft. Functionally, G-protein coupled receptor for the bioactive lysosphingolipid sphingosine 1-phosphate (S1P) that seems to be coupled to the G(i) subclass of heteromeric G proteins. Signaling leads to the activation of RAC1, SRC, PTK2/FAK1 and MAP kinases. Plays an important role in cell migration, probably via its role in the reorganization of the actin cytoskeleton and the formation of lamellipodia in response to stimuli that increase the activity of the sphingosine kinase SPHK1. Required for normal chemotaxis toward sphingosine 1-phosphate. Required for normal embryonic heart development and normal cardiac morphogenesis. Plays an important role in the regulation of sprouting angiogenesis and vascular maturation. Inhibits sprouting angiogenesis to prevent excessive sprouting during blood vessel development. Required for normal egress of mature T-cells from the thymus into the blood stream and into peripheral lymphoid organs. Plays a role in the migration of osteoclast precursor cells, the regulation of bone mineralization and bone homeostasis. Plays a role in responses to oxidized 1-palmitoyl-2-arachidonoyl-sn-glycero-3-phosphocholine by pulmonary endothelial cells and in the protection against ventilator-induced lung injury. The protein is Sphingosine 1-phosphate receptor 1 of Mus musculus (Mouse).